The sequence spans 776 residues: 5-methyltetrahydropteroyltriglutamate--homocysteine methyltransferase (776 aa).

5-methyltetrahydropteroyltri-L-glutamate-binding positions include 16 to 19 (RELK) and Lys-112. L-homocysteine is bound by residues 432–434 (IGS) and Glu-485. L-methionine contacts are provided by residues 432 to 434 (IGS) and Glu-485. 5-methyltetrahydropteroyltri-L-glutamate contacts are provided by residues 516-517 (RC) and Trp-562. L-homocysteine is bound at residue Asp-600. Asp-600 is an L-methionine binding site. Glu-606 contributes to the 5-methyltetrahydropteroyltri-L-glutamate binding site. Residues His-642, Cys-644, and Glu-666 each coordinate Zn(2+). The active-site Proton donor is the His-695. Cys-727 is a Zn(2+) binding site. Residues 755-776 (HAGAVHAGTPATRAEHAESALA) form a disordered region. Residues 767–776 (RAEHAESALA) are compositionally biased toward basic and acidic residues.

It belongs to the vitamin-B12 independent methionine synthase family. Zn(2+) is required as a cofactor.

It carries out the reaction 5-methyltetrahydropteroyltri-L-glutamate + L-homocysteine = tetrahydropteroyltri-L-glutamate + L-methionine. The protein operates within amino-acid biosynthesis; L-methionine biosynthesis via de novo pathway; L-methionine from L-homocysteine (MetE route): step 1/1. In terms of biological role, catalyzes the transfer of a methyl group from 5-methyltetrahydrofolate to homocysteine resulting in methionine formation. This chain is 5-methyltetrahydropteroyltriglutamate--homocysteine methyltransferase, found in Ralstonia nicotianae (strain ATCC BAA-1114 / GMI1000) (Ralstonia solanacearum).